Reading from the N-terminus, the 271-residue chain is Phosphate import ATP-binding protein PstB (271 aa).

Residues 24 to 266 (MIGNDVSVYY…PDDQRTQDYI (243 aa)) enclose the ABC transporter domain. An ATP-binding site is contributed by 56–63 (GPSGCGKS).

The protein belongs to the ABC transporter superfamily. Phosphate importer (TC 3.A.1.7) family. In terms of assembly, the complex is composed of two ATP-binding proteins (PstB), two transmembrane proteins (PstC and PstA) and a solute-binding protein (PstS).

It localises to the cell inner membrane. The catalysed reaction is phosphate(out) + ATP + H2O = ADP + 2 phosphate(in) + H(+). Part of the ABC transporter complex PstSACB involved in phosphate import. Responsible for energy coupling to the transport system. This is Phosphate import ATP-binding protein PstB from Rhizobium meliloti (strain 1021) (Ensifer meliloti).